The primary structure comprises 134 residues: Profilin-5 (134 aa).

Belongs to the profilin family. Occurs in many kinds of cells as a complex with monomeric actin in a 1:1 ratio. In terms of tissue distribution, specifically expressed in mature pollen grains. Expressed in germinating pollen grains. Expressed in growing pollen tubes (at protein level).

It localises to the cytoplasm. Its subcellular location is the cytoskeleton. In terms of biological role, binds to actin monomers and regulates the organization of the actin cytoskeleton. At high concentrations, profilin prevents the polymerization of actin, whereas it enhances it at low concentrations. At low concentrations, associates with the poly-proline motif of formins to enhance actin filament elongation rate. Acts redundantly with PRF4 to regulate apical actin polymerization at the tip of pollen tube and control polarized pollen tube growth. Functions probably by favoring formin-mediated actin polymerization at pollen tube tips. The chain is Profilin-5 from Arabidopsis thaliana (Mouse-ear cress).